We begin with the raw amino-acid sequence, 389 residues long: Chalcone synthase 1 (389 aa).

Residue cysteine 164 is part of the active site.

This sequence belongs to the thiolase-like superfamily. Chalcone/stilbene synthases family.

It catalyses the reaction (E)-4-coumaroyl-CoA + 3 malonyl-CoA + 3 H(+) = 2',4,4',6'-tetrahydroxychalcone + 3 CO2 + 4 CoA. The protein operates within secondary metabolite biosynthesis; flavonoid biosynthesis. The primary product of this enzyme is 4,2',4',6'-tetrahydroxychalcone (also termed naringenin-chalcone or chalcone) which can under specific conditions spontaneously isomerize into naringenin. The protein is Chalcone synthase 1 (CHS1) of Solanum lycopersicum (Tomato).